We begin with the raw amino-acid sequence, 614 residues long: Phosphomethylpyrimidine synthase (614 aa).

Substrate is bound by residues asparagine 230, methionine 259, tyrosine 288, histidine 324, 344 to 346, 385 to 388, and glutamate 424; these read SRG and DGLR. A Zn(2+)-binding site is contributed by histidine 428. Position 451 (tyrosine 451) interacts with substrate. Histidine 492 serves as a coordination point for Zn(2+). Cysteine 572, cysteine 575, and cysteine 580 together coordinate [4Fe-4S] cluster.

The protein belongs to the ThiC family. As to quaternary structure, homodimer. [4Fe-4S] cluster serves as cofactor.

The catalysed reaction is 5-amino-1-(5-phospho-beta-D-ribosyl)imidazole + S-adenosyl-L-methionine = 4-amino-2-methyl-5-(phosphooxymethyl)pyrimidine + CO + 5'-deoxyadenosine + formate + L-methionine + 3 H(+). Its pathway is cofactor biosynthesis; thiamine diphosphate biosynthesis. In terms of biological role, catalyzes the synthesis of the hydroxymethylpyrimidine phosphate (HMP-P) moiety of thiamine from aminoimidazole ribotide (AIR) in a radical S-adenosyl-L-methionine (SAM)-dependent reaction. In Stenotrophomonas maltophilia (strain K279a), this protein is Phosphomethylpyrimidine synthase.